The chain runs to 305 residues: Ribosomal RNA small subunit methyltransferase H (305 aa).

Residues 30-32 (GGH), Asp49, Phe74, Asp96, and Gln103 each bind S-adenosyl-L-methionine.

This sequence belongs to the methyltransferase superfamily. RsmH family.

The protein resides in the cytoplasm. The catalysed reaction is cytidine(1402) in 16S rRNA + S-adenosyl-L-methionine = N(4)-methylcytidine(1402) in 16S rRNA + S-adenosyl-L-homocysteine + H(+). Its function is as follows. Specifically methylates the N4 position of cytidine in position 1402 (C1402) of 16S rRNA. This chain is Ribosomal RNA small subunit methyltransferase H, found in Francisella tularensis subsp. mediasiatica (strain FSC147).